Consider the following 1016-residue polypeptide: FHIP family protein Bm1_18400 (1016 aa).

Disordered regions lie at residues 586–608 (DSLR…RSSF) and 757–778 (SDGF…PLGK).

This sequence belongs to the FHIP family.

The polypeptide is FHIP family protein Bm1_18400 (Brugia malayi (Filarial nematode worm)).